We begin with the raw amino-acid sequence, 600 residues long: Glutamine--fructose-6-phosphate aminotransferase [isomerizing] (600 aa).

Cysteine 2 functions as the Nucleophile; for GATase activity in the catalytic mechanism. One can recognise a Glutamine amidotransferase type-2 domain in the interval 2 to 217 (CGIVGYIGQL…DKEMVIVTDK (216 aa)). 2 SIS domains span residues 283–422 (ISNA…SRGK) and 452–590 (IARE…VDKP). Residue lysine 595 is the For Fru-6P isomerization activity of the active site.

In terms of assembly, homodimer.

The protein localises to the cytoplasm. It carries out the reaction D-fructose 6-phosphate + L-glutamine = D-glucosamine 6-phosphate + L-glutamate. In terms of biological role, catalyzes the first step in hexosamine metabolism, converting fructose-6P into glucosamine-6P using glutamine as a nitrogen source. The sequence is that of Glutamine--fructose-6-phosphate aminotransferase [isomerizing] from Bacillus licheniformis (strain ATCC 14580 / DSM 13 / JCM 2505 / CCUG 7422 / NBRC 12200 / NCIMB 9375 / NCTC 10341 / NRRL NRS-1264 / Gibson 46).